An 852-amino-acid polypeptide reads, in one-letter code: Lon protease homolog 2, peroxisomal (852 aa).

Residue serine 2 is modified to N-acetylserine. Positions 13-222 (LPLLLTHEGV…MTIPLLVRQI (210 aa)) constitute a Lon N-terminal domain. An ATP-binding site is contributed by 375-382 (GPPGVGKT). Positions 651–837 (LSQPGVAIGL…DEVLNAAFDG (187 aa)) constitute a Lon proteolytic domain. Catalysis depends on residues serine 743 and lysine 786. A Microbody targeting signal motif is present at residues 850–852 (SKL).

Belongs to the peptidase S16 family. As to quaternary structure, interacts with PEX5. Interacts with TYSND1. May interact with enzymes involved in beta-oxidation of fatty acids, including ACOX1/AOX. In terms of tissue distribution, widely expressed, with high levels in the liver, kidney and pancreas.

It is found in the peroxisome matrix. It carries out the reaction Hydrolysis of proteins in presence of ATP.. ATP-dependent serine protease that mediates the selective degradation of misfolded and unassembled polypeptides in the peroxisomal matrix. Necessary for type 2 peroxisome targeting signal (PTS2)-containing protein processing and facilitates peroxisome matrix protein import. May indirectly regulate peroxisomal fatty acid beta-oxidation through degradation of the self-processed forms of TYSND1. This is Lon protease homolog 2, peroxisomal from Homo sapiens (Human).